We begin with the raw amino-acid sequence, 453 residues long: Aldehyde dehydrogenase, dimeric NADP-preferring (453 aa).

An N-acetylserine modification is found at Ser2. Position 178 is an N6-acetyllysine (Lys178). 188-193 (GSTGVG) contributes to the NAD(+) binding site. Lys194 bears the N6-acetyllysine mark. Active-site residues include Glu210 and Cys244.

This sequence belongs to the aldehyde dehydrogenase family. Homodimer. In terms of tissue distribution, high levels in stomach, esophagus and lung; low level in the liver and kidney.

Its subcellular location is the cytoplasm. The enzyme catalyses an aldehyde + NAD(+) + H2O = a carboxylate + NADH + 2 H(+). It carries out the reaction octanal + NAD(+) + H2O = octanoate + NADH + 2 H(+). In terms of biological role, ALDHs play a major role in the detoxification of alcohol-derived acetaldehyde. They are involved in the metabolism of corticosteroids, biogenic amines, neurotransmitters, and lipid peroxidation. Oxidizes medium and long chain aldehydes into non-toxic fatty acids. Preferentially oxidizes aromatic aldehyde substrates. Comprises about 50 percent of corneal epithelial soluble proteins. May play a role in preventing corneal damage caused by ultraviolet light. The protein is Aldehyde dehydrogenase, dimeric NADP-preferring (ALDH3A1) of Homo sapiens (Human).